Reading from the N-terminus, the 730-residue chain is Regulatory factor X 4 (730 aa).

Polar residues predominate over residues 30–41 (YSSHTSLGNISN). The segment at 30–59 (YSSHTSLGNISNDETDEEKENRASKPHSTP) is disordered. Positions 61–136 (TLQWLGENYE…YHYYGIAVKE (76 aa)) form a DNA-binding region, RFX-type winged-helix. Positions 500 to 532 (EPAISTPSPVPFSPAASSSSVEIPSATSPVSNQ) are disordered. Low complexity predominate over residues 512-528 (SPAASSSSVEIPSATSP).

Belongs to the RFX family.

It is found in the nucleus. Its function is as follows. Required for neural tube ciliogenesis during embryogenesis. This chain is Regulatory factor X 4, found in Xenopus laevis (African clawed frog).